The chain runs to 465 residues: Cysteine--tRNA ligase (465 aa).

Cys-27 is a binding site for Zn(2+). Positions 29-39 match the 'HIGH' region motif; sequence PTVYDDAHLGH. Zn(2+) contacts are provided by Cys-207, His-237, and Glu-241. The 'KMSKS' region motif lies at 269–273; the sequence is KMSKS. Lys-272 contributes to the ATP binding site.

This sequence belongs to the class-I aminoacyl-tRNA synthetase family. Monomer. It depends on Zn(2+) as a cofactor.

The protein resides in the cytoplasm. It carries out the reaction tRNA(Cys) + L-cysteine + ATP = L-cysteinyl-tRNA(Cys) + AMP + diphosphate. This Helicobacter acinonychis (strain Sheeba) protein is Cysteine--tRNA ligase.